We begin with the raw amino-acid sequence, 284 residues long: 2-dehydro-3-deoxyphosphooctonate aldolase (284 aa).

It belongs to the KdsA family.

It is found in the cytoplasm. The enzyme catalyses D-arabinose 5-phosphate + phosphoenolpyruvate + H2O = 3-deoxy-alpha-D-manno-2-octulosonate-8-phosphate + phosphate. The protein operates within carbohydrate biosynthesis; 3-deoxy-D-manno-octulosonate biosynthesis; 3-deoxy-D-manno-octulosonate from D-ribulose 5-phosphate: step 2/3. It participates in bacterial outer membrane biogenesis; lipopolysaccharide biosynthesis. In Aliivibrio salmonicida (strain LFI1238) (Vibrio salmonicida (strain LFI1238)), this protein is 2-dehydro-3-deoxyphosphooctonate aldolase.